The sequence spans 220 residues: Superoxide dismutase [Fe] (220 aa).

Fe cation-binding residues include histidine 26, histidine 73, aspartate 164, and histidine 168.

This sequence belongs to the iron/manganese superoxide dismutase family. In terms of assembly, homodimer. Fe cation is required as a cofactor.

The catalysed reaction is 2 superoxide + 2 H(+) = H2O2 + O2. Destroys superoxide anion radicals which are normally produced within the cells and which are toxic to biological systems. This Campylobacter jejuni subsp. jejuni serotype O:2 (strain ATCC 700819 / NCTC 11168) protein is Superoxide dismutase [Fe] (sodB).